An 85-amino-acid chain; its full sequence is Small ribosomal subunit protein uS17 (85 aa).

Belongs to the universal ribosomal protein uS17 family. Part of the 30S ribosomal subunit.

Functionally, one of the primary rRNA binding proteins, it binds specifically to the 5'-end of 16S ribosomal RNA. In Desulforapulum autotrophicum (strain ATCC 43914 / DSM 3382 / VKM B-1955 / HRM2) (Desulfobacterium autotrophicum), this protein is Small ribosomal subunit protein uS17.